A 352-amino-acid chain; its full sequence is Cysteinyl leukotriene receptor 1 (352 aa).

Residues 1–43 (MYLQGTKQTFLENMNGTENLTTSLINNTCHDTIDEFRNQVYST) lie on the Extracellular side of the membrane. Residues Asn15, Asn19, and Asn26 are each glycosylated (N-linked (GlcNAc...) asparagine). The chain crosses the membrane as a helical span at residues 44–64 (MYSVISVVGFFGNSFVLYVLI). Residues 65–72 (KTYHEKSA) lie on the Cytoplasmic side of the membrane. Residues 73–93 (FQVYMINLAIADLLCVCTLPL) traverse the membrane as a helical segment. Topologically, residues 94 to 121 (RVVYYVHKGKWLFGDFLCRLTTYALYVN) are extracellular. An intrachain disulfide couples Cys111 to Cys188. Residues 122 to 142 (LYCSIFFMTAMSFFRCVAIVF) form a helical membrane-spanning segment. Topologically, residues 143–156 (PVQNINLVTQKKAR) are cytoplasmic. Residues 157-177 (FVCIGIWIFVILTSSPFLMYK) traverse the membrane as a helical segment. At 178 to 208 (SYQDEKNNTKCFEPPQNNQAKKYVLILHYVS) the chain is on the extracellular side. Residue Asn184 is glycosylated (N-linked (GlcNAc...) asparagine). A helical membrane pass occupies residues 209 to 229 (LFFGFIIPFVTIIVCYTMIIL). At 230–245 (TLLKNTMKKNMPSRRK) the chain is on the cytoplasmic side. A helical membrane pass occupies residues 246-266 (AIGMIIVVTAAFLVSFMPYHI). Residues 267 to 291 (QRTIHLHLLHSETRPCDSVLRMQKS) are Extracellular-facing. A helical membrane pass occupies residues 292–312 (VVITLSLAASNCCFDPLLYFF). Topologically, residues 313–352 (SGGNFRRRLSTFRKHSLSSMTYVPKKKASLPEKGEEICNE) are cytoplasmic.

This sequence belongs to the G-protein coupled receptor 1 family. In terms of tissue distribution, widely expressed, with higher expression in the lung and skin, intermediate levels in the heart, kidney and stomach and lower levels in several other tissues. Isoform 1 is the most abundant form in all tested tissues.

It localises to the cell membrane. Its function is as follows. Receptor for cysteinyl leukotrienes mediating constriction of the microvascular smooth muscle during an inflammatory response. This response is mediated via a G-protein that activates a phosphatidylinositol-calcium second messenger system. The rank order of affinities for the leukotrienes is LTD4 &gt;&gt; LTE4 = LTC4 &gt;&gt; LTB4. The chain is Cysteinyl leukotriene receptor 1 (Cysltr1) from Mus musculus (Mouse).